The sequence spans 141 residues: Sec-independent protein translocase protein TatB (141 aa).

The chain crosses the membrane as a helical span at residues 1–21 (MFGISFSELLLVGLVALLVLG). The segment at 74–141 (EAQKLLAPLT…SPPSETPRNP (68 aa)) is disordered. A compositionally biased stretch (pro residues) spans 89–115 (QETPPPAAESPAPSVPTPPPTSTPAVP). Residues 116–129 (PADAAAPPAVAAST) are compositionally biased toward low complexity. A compositionally biased stretch (pro residues) spans 130–141 (PPSPPSETPRNP).

It belongs to the TatB family. As to quaternary structure, the Tat system comprises two distinct complexes: a TatABC complex, containing multiple copies of TatA, TatB and TatC subunits, and a separate TatA complex, containing only TatA subunits. Substrates initially bind to the TatABC complex, which probably triggers association of the separate TatA complex to form the active translocon.

The protein localises to the cell inner membrane. Part of the twin-arginine translocation (Tat) system that transports large folded proteins containing a characteristic twin-arginine motif in their signal peptide across membranes. Together with TatC, TatB is part of a receptor directly interacting with Tat signal peptides. TatB may form an oligomeric binding site that transiently accommodates folded Tat precursor proteins before their translocation. The sequence is that of Sec-independent protein translocase protein TatB from Pseudomonas aeruginosa (strain ATCC 15692 / DSM 22644 / CIP 104116 / JCM 14847 / LMG 12228 / 1C / PRS 101 / PAO1).